The following is a 223-amino-acid chain: Type II restriction enzyme BglII (223 aa).

Mg(2+) contacts are provided by aspartate 84 and valine 94.

In terms of assembly, homodimer. Requires Mg(2+) as cofactor.

The catalysed reaction is Endonucleolytic cleavage of DNA to give specific double-stranded fragments with terminal 5'-phosphates.. A P subtype restriction enzyme that recognizes the double-stranded sequence 5'-AGATCT-3' and cleaves after A-1. This chain is Type II restriction enzyme BglII (bglIIR), found in Bacillus subtilis.